A 518-amino-acid chain; its full sequence is Putative N-acetylmuramoyl-L-alanine amidase YrvJ (518 aa).

The N-terminal stretch at Met1–Ala27 is a signal peptide. SH3b domains follow at residues Gln29–Glu91, Ser102–Gly164, Ser181–Ser243, and Ala258–Ser320. Disordered stretches follow at residues Ala94–Ser121 and Val160–Val186. 2 stretches are compositionally biased toward low complexity: residues Ser95–Thr108 and Val160–Ser169. Positions Ser322–His352 are disordered. A compositionally biased stretch (polar residues) spans Asp333–Thr345. Residues Ile346 to Glu514 form the MurNAc-LAA domain.

It belongs to the N-acetylmuramoyl-L-alanine amidase 3 family.

The protein localises to the secreted. The protein resides in the cell wall. The enzyme catalyses Hydrolyzes the link between N-acetylmuramoyl residues and L-amino acid residues in certain cell-wall glycopeptides.. Its function is as follows. Probably involved in cell-wall metabolism. The chain is Putative N-acetylmuramoyl-L-alanine amidase YrvJ (yrvJ) from Bacillus subtilis (strain 168).